The chain runs to 95 residues: Co-chaperonin GroES (95 aa).

This sequence belongs to the GroES chaperonin family. As to quaternary structure, heptamer of 7 subunits arranged in a ring. Interacts with the chaperonin GroEL.

It localises to the cytoplasm. Together with the chaperonin GroEL, plays an essential role in assisting protein folding. The GroEL-GroES system forms a nano-cage that allows encapsulation of the non-native substrate proteins and provides a physical environment optimized to promote and accelerate protein folding. GroES binds to the apical surface of the GroEL ring, thereby capping the opening of the GroEL channel. This Caldicellulosiruptor bescii (strain ATCC BAA-1888 / DSM 6725 / KCTC 15123 / Z-1320) (Anaerocellum thermophilum) protein is Co-chaperonin GroES.